Here is a 202-residue protein sequence, read N- to C-terminus: Guanylyl cyclase-activating protein 1 (202 aa).

A lipid anchor (N-myristoyl glycine) is attached at glycine 2. Asparagine 3 is modified (deamidated asparagine). EF-hand domains follow at residues 31-49 (SGQLTLYEFRQFFGLKNLS), 51-86 (SASQYVEQMFETFDFNKDGYIDFMEYVAALSLVLKG), 87-122 (KVEQKLRWYFKLYDVDGNGCIDRDELLTIIRAIRTI), and 131-166 (SAEEFTDTVFAKIDINGDGELSLEEFMEGVQKDQML). 15 residues coordinate Ca(2+): aspartate 64, asparagine 66, aspartate 68, tyrosine 70, glutamate 75, aspartate 100, aspartate 102, asparagine 104, cysteine 106, glutamate 111, aspartate 144, asparagine 146, aspartate 148, glutamate 150, and glutamate 155.

Homodimer. In the retina, expressed in rod photoreceptors (at protein level). Expressed in cone photoreceptors.

It is found in the membrane. The protein localises to the photoreceptor inner segment. The protein resides in the cell projection. It localises to the cilium. Its subcellular location is the photoreceptor outer segment. In terms of biological role, stimulates retinal guanylyl cyclase when free calcium ions concentration is low and inhibits guanylyl cyclase when free calcium ions concentration is elevated. This Ca(2+)-sensitive regulation of retinal guanylyl cyclase is a key event in recovery of the dark state of rod photoreceptors following light exposure. May be involved in cone photoreceptor light response and recovery of response in bright light. The protein is Guanylyl cyclase-activating protein 1 (Guca1a) of Mus musculus (Mouse).